Here is a 179-residue protein sequence, read N- to C-terminus: Large ribosomal subunit protein uL5c (179 aa).

Belongs to the universal ribosomal protein uL5 family. In terms of assembly, part of the 50S ribosomal subunit; contacts the 5S rRNA.

Its subcellular location is the plastid. It is found in the organellar chromatophore. In terms of biological role, binds 5S rRNA, forms part of the central protuberance of the 50S subunit. In Paulinella chromatophora, this protein is Large ribosomal subunit protein uL5c (rpl5).